Consider the following 510-residue polypeptide: 2,3-bisphosphoglycerate-independent phosphoglycerate mutase (510 aa).

Residues D10 and S60 each contribute to the Mn(2+) site. S60 acts as the Phosphoserine intermediate in catalysis. Substrate contacts are provided by residues H121, 150–151 (RD), R182, R188, 252–255 (RPDR), and K325. Positions 392, 396, 433, 434, and 451 each coordinate Mn(2+).

It belongs to the BPG-independent phosphoglycerate mutase family. It depends on Mn(2+) as a cofactor.

The protein resides in the plastid. It is found in the chloroplast. It catalyses the reaction (2R)-2-phosphoglycerate = (2R)-3-phosphoglycerate. It participates in carbohydrate degradation; glycolysis; pyruvate from D-glyceraldehyde 3-phosphate: step 3/5. Its function is as follows. Catalyzes the interconversion of 2-phosphoglycerate and 3-phosphoglycerate. This Gracilaria tenuistipitata var. liui (Red alga) protein is 2,3-bisphosphoglycerate-independent phosphoglycerate mutase.